The chain runs to 387 residues: MQTGHPADGVYFGLMSGTSMDGVDGIAVRFEAGKPPAVLSEAFVGFADTLRDALFALQQPGDDEIEREALAANALAARYAVCCHELLRTAGLSPDDVRALGVHGQTVRHRPERGYTRQLNNAALLAELTRIDVIADFRSRDVAAGGQGAPLVPAFHATVFGSPDETRVVCNLGGISNITILPAGGGPQGEGHARNDTVRGHDCGPANALIDAWVERHLKQPFDDGGRFAARGKVDETLLAALLDEPYFRQNAPKSTGRDLFNADWLDAKLAGFQHLAPENVQATLTALTAATVADEIARHAGDCRAVYVCGGGARNPVLLDALATALAARGLDAAVATTAALGVPPQQVESLAFAWLAYRFNARAPGNVSTVTGAAGERVLGALYPR.

Residue 17 to 24 (GTSMDGVD) participates in ATP binding.

The protein belongs to the anhydro-N-acetylmuramic acid kinase family.

It carries out the reaction 1,6-anhydro-N-acetyl-beta-muramate + ATP + H2O = N-acetyl-D-muramate 6-phosphate + ADP + H(+). It functions in the pathway amino-sugar metabolism; 1,6-anhydro-N-acetylmuramate degradation. It participates in cell wall biogenesis; peptidoglycan recycling. Catalyzes the specific phosphorylation of 1,6-anhydro-N-acetylmuramic acid (anhMurNAc) with the simultaneous cleavage of the 1,6-anhydro ring, generating MurNAc-6-P. Is required for the utilization of anhMurNAc either imported from the medium or derived from its own cell wall murein, and thus plays a role in cell wall recycling. This Burkholderia pseudomallei (strain K96243) protein is Anhydro-N-acetylmuramic acid kinase.